A 265-amino-acid chain; its full sequence is Selenoprotein Pb (265 aa).

An N-terminal signal peptide occupies residues 1–18; it reads MQALWPLLLSALPALLGA. N-linked (GlcNAc...) asparagine glycosylation is present at N28. Residue U64 is a non-standard amino acid, selenocysteine. N-linked (GlcNAc...) asparagine glycosylation is found at N88, N178, N184, and N207. Residues 188-265 are disordered; sequence SESSDSTKND…SHQEHVHNHR (78 aa). Residues 201 to 211 are compositionally biased toward polar residues; it reads ENNQRPNSTEP. The segment covering 215 to 231 has biased composition (basic residues); that stretch reads AHHHHHQQHEPHHHHHN. Residues 239–265 show a composition bias toward basic and acidic residues; sequence KSGDSDVTGKPKEPPHHSHQEHVHNHR.

The protein localises to the secreted. Its function is as follows. Might be responsible for some of the extracellular antioxidant defense properties of selenium. This is Selenoprotein Pb (sepp1b) from Danio rerio (Zebrafish).